The following is a 211-amino-acid chain: Small ribosomal subunit protein uS3 (211 aa).

Residues 38-106 (LRKFIKKAFY…NIELNIIEVK (69 aa)) enclose the KH type-2 domain.

Belongs to the universal ribosomal protein uS3 family. Part of the 30S ribosomal subunit. Forms a tight complex with proteins S10 and S14.

In terms of biological role, binds the lower part of the 30S subunit head. Binds mRNA in the 70S ribosome, positioning it for translation. This Ehrlichia canis (strain Jake) protein is Small ribosomal subunit protein uS3.